The following is an 847-amino-acid chain: Endo-beta-N-acetylglucosaminidase EndoSd (847 aa).

Residues 1-36 (MDKRLLVKRTLGCVCAATLMGAILATHHDSLISVKA) form the signal peptide. Residues 65 to 377 (PLYAGYFRTW…HPVVDNISHT (313 aa)) enclose the GH18 domain. An a glycoprotein-binding site is contributed by His-107. Glu-186 (proton donor) is an active-site residue. A glycoprotein contacts are provided by Glu-188, Gln-250, Tyr-252, Glu-288, Glu-289, Asn-295, and Tyr-339. LRR repeat units follow at residues 423 to 446 (LERY…LEKL), 447 to 470 (SHLQ…ILPE), 483 to 506 (MTGL…DVNG), and 507 to 530 (LTHL…ADRK). The segment at 683–836 (MENLAKGAKV…YTELQILGQR (154 aa)) is carbohydrate-binding module (CBM). Ca(2+) is bound by residues Lys-704, Asp-707, and Glu-829.

This sequence belongs to the glycosyl hydrolase 18 family.

Its subcellular location is the secreted. It localises to the host extracellular space. It carries out the reaction an N(4)-(oligosaccharide-(1-&gt;3)-[oligosaccharide-(1-&gt;6)]-beta-D-Man-(1-&gt;4)-beta-D-GlcNAc-(1-&gt;4)-alpha-D-GlcNAc)-L-asparaginyl-[protein] + H2O = an oligosaccharide-(1-&gt;3)-[oligosaccharide-(1-&gt;6)]-beta-D-Man-(1-&gt;4)-D-GlcNAc + N(4)-(N-acetyl-beta-D-glucosaminyl)-L-asparaginyl-[protein]. Endoglucosidase that acts as a host immune evasion factor by mediating hydrolysis of the N-linked glycan from the Fc region of host immunoglobulin-gamma (IgG) during infection. Specifically catalyzes the hydrolysis of the beta-1,4 linkage between the first two N-acetylglucosamine residues of the complex-type N-linked glycan located on 'Asn-297' of the Fc region of IgG antibodies (IGHG1, IGHG2, IGHG3 or IGHG4), thereby preventing interaction between IgGs and Fc receptors and ability to activate the complement pathway. Shows a specificity for biantennary complex type N-glycans; does neither cleave larger complex type glycans nor oligomannose and nor hybrid-type glycans. Specifically acts on IgGs; does not act on immunoglobulin alpha, beta, delta or mu. This chain is Endo-beta-N-acetylglucosaminidase EndoSd, found in Streptococcus dysgalactiae.